Reading from the N-terminus, the 238-residue chain is Sugar fermentation stimulation protein homolog (238 aa).

Belongs to the SfsA family.

This is Sugar fermentation stimulation protein homolog from Haemophilus influenzae (strain ATCC 51907 / DSM 11121 / KW20 / Rd).